The primary structure comprises 602 residues: ATP-dependent zinc metalloprotease FtsH 3 (602 aa).

Residues 1–18 (MNSWFLQVSKRLGPAGRR) are Cytoplasmic-facing. The helical transmembrane segment at 19–39 (LWLLGFMGVVLAVTLGLALRA) threads the bilayer. Over 40–117 (ARESATQRTA…DFASREDPSR (78 aa)) the chain is Periplasmic. Residues 118–138 (AASAVLPVVVLAAVGFALFTV) form a helical membrane-spanning segment. At 139 to 602 (SRRRSPKVFS…RRPRPEDQAA (464 aa)) the chain is on the cytoplasmic side. Position 202-209 (202-209 (GEPGTGKT)) interacts with ATP. His425 lines the Zn(2+) pocket. Glu426 is a catalytic residue. Zn(2+) contacts are provided by His429 and Asp501.

It in the central section; belongs to the AAA ATPase family. This sequence in the C-terminal section; belongs to the peptidase M41 family. In terms of assembly, homohexamer. Zn(2+) is required as a cofactor.

The protein resides in the cell inner membrane. In terms of biological role, acts as a processive, ATP-dependent zinc metallopeptidase for both cytoplasmic and membrane proteins. Plays a role in the quality control of integral membrane proteins. The chain is ATP-dependent zinc metalloprotease FtsH 3 from Sorangium cellulosum (strain So ce56) (Polyangium cellulosum (strain So ce56)).